The following is a 704-amino-acid chain: Rabphilin-3A (704 aa).

Polar residues predominate over residues 1-12 (MTDTVFSSSSSR). Residues 1 to 52 (MTDTVFSSSSSRWMCPSDRPLQSNDKEQLQTGWSVHPSGQPDRQRKQEELTD) are disordered. In terms of domain architecture, RabBD spans 44-161 (QRKQEELTDE…KRSGAWFFKG (118 aa)). The FYVE-type zinc finger occupies 92–149 (GDGVNRCILCGEQLGMLGSACVVCEDCKKNVCTKCGVETSNNRPHPVWLCKICIEQRE). Residues Cys98, Cys101, Cys115, Cys118, Cys123, Cys126, Cys141, and Cys144 each contribute to the Zn(2+) site. A disordered region spans residues 167–398 (LPQPMPIKKN…EEEANSYDSD (232 aa)). The span at 205-214 (TRGDTEDRRG) shows a compositional bias: basic and acidic residues. Residue Arg229 is modified to Omega-N-methylarginine. Residue Ser277 is modified to Phosphoserine. Residues 279–290 (QASRPAPASMQS) show a composition bias toward low complexity. The span at 291 to 310 (PAPPQPGQPGPPGGSRPSPG) shows a compositional bias: pro residues. A compositionally biased stretch (low complexity) spans 366–380 (QASAAAPQPVVASAR). The span at 385–398 (PEEDEEEANSYDSD) shows a compositional bias: acidic residues. The C2 1 domain maps to 402–524 (TLGALEFSLL…KPNQRKNFNI (123 aa)). Residues Met432, Asp433, Asp439, Asp494, Glu495, Asp496, Glu502, Glu549, Asp591, Asp597, Asp651, Tyr652, Asp653, and Asp659 each contribute to the Ca(2+) site. A C2 2 domain is found at 560 to 693 (ERGKILVSLM…NKDKKIERWH (134 aa)). Phosphoserine is present on residues Ser702 and Ser703.

Interacts with RAB3B, RAB3C, RAB3D, RAB8A, RAB27A and RAB27B. Interacts with RAB3A; this interaction recruits RPH3A to synaptic vesicules. Interacts (via C2B domain) with SNAP25. Interacts with deubiquitinating enzyme CAND1; this interaction results in the deubiquitination of RPH3A. Interacts with GRIN2A and DLG4; this ternary complex regulates NMDA receptor composition at postsynaptic membranes. Interacts with SNCA. Ca(2+) is required as a cofactor. Post-translationally, ubiquitinated. Deubiquitinated by CAND1 to prevent its degradation. Specifically expressed in brain.

It localises to the cytoplasmic vesicle. Its subcellular location is the secretory vesicle. The protein localises to the synaptic vesicle membrane. It is found in the cell projection. The protein resides in the dendritic spine. It localises to the postsynaptic cell membrane. Its subcellular location is the membrane. Functionally, plays an essential role in docking and fusion steps of regulated exocytosis. At the presynaptic level, RPH3A is recruited by RAB3A to the synaptic vesicle membrane in a GTP-dependent manner where it modulates synaptic vesicle trafficking and calcium-triggered neurotransmitter release. In the post-synaptic compartment, forms a ternary complex with GRIN2A and DLG4 and regulates NMDA receptor stability. Also plays a role in the exocytosis of arginine vasopressin hormone. The chain is Rabphilin-3A (RPH3A) from Bos taurus (Bovine).